The sequence spans 460 residues: Elongation factor 1-alpha (460 aa).

Position 2 is a n,N,N-trimethylglycine (Gly2). Residue Lys3 is modified to N6,N6-dimethyllysine; alternate. Lys3 carries the post-translational modification N6-methyllysine; alternate. Residues 6 to 241 (KQHINIVVIG…DAIEPPVRPT (236 aa)) enclose the tr-type G domain. Residues 15–22 (GHVDSGKS) are G1. Residue 15–22 (GHVDSGKS) coordinates GTP. N6-methyllysine is present on Lys31. The tract at residues 71 to 75 (GITID) is G2. At Lys80 the chain carries N6,N6,N6-trimethyllysine. The tract at residues 92–95 (DAPG) is G3. GTP is bound by residues 92–96 (DAPGH) and 154–157 (NKMD). The interval 154-157 (NKMD) is G4. Residues 193–195 (SGF) form a G5 region. At Lys317 the chain carries N6,N6-dimethyllysine; alternate. Lys317 carries the post-translational modification N6-methyllysine; alternate. Lys391 is subject to N6-methyllysine.

This sequence belongs to the TRAFAC class translation factor GTPase superfamily. Classic translation factor GTPase family. EF-Tu/EF-1A subfamily.

It localises to the cytoplasm. Functionally, this protein promotes the GTP-dependent binding of aminoacyl-tRNA to the A-site of ribosomes during protein biosynthesis. The protein is Elongation factor 1-alpha (tef1) of Aspergillus oryzae (strain ATCC 42149 / RIB 40) (Yellow koji mold).